An 808-amino-acid polypeptide reads, in one-letter code: Tegument protein UL47 homolog (808 aa).

Disordered regions lie at residues 1–21 (MQMP…RENQ) and 77–266 (PNEE…SFGE). Positions 83–92 (DNSRGRDRTR) are enriched in basic and acidic residues. Residues 133 to 160 (SRARSRRRSSSRRRHRNASMHMHFRGGS) show a composition bias toward basic residues. The segment covering 162-171 (RSATGSQNLI) has biased composition (polar residues). A compositionally biased stretch (basic residues) spans 197-214 (RSSRVRRRHRRSSRRRGP). The span at 235 to 259 (PISDIDQKRLRKNSDTSSRGTRESP) shows a compositional bias: basic and acidic residues.

Belongs to the alphaherpesvirinae HHV-1 UL47 family. In terms of assembly, interacts with US3 kinase. Interacts with UL31 and UL34; these interactions seem important for efficient virion nuclear egress. Interacts with UL41/VHS. In terms of processing, phosphorylated by US3. This phosphorylation is required for proper nuclear localization. Post-translationally, O-glycosylated.

The protein localises to the virion tegument. Its subcellular location is the host nucleus. The protein resides in the host cytoplasm. In terms of biological role, tegument protein that can bind to various RNA transcripts. Plays a role in the attenuation of selective viral and cellular mRNA degradation by modulating the activity of host shutoff RNase UL41/VHS. Also plays a role in the primary envelopment of virions in the perinuclear space, probably by interacting with two nuclear egress proteins UL31 and UL34. Plays an important role in the splicing of glycoprotein/gC transcripts and thereby participates in bird-to-bird viral transmission. This is Tegument protein UL47 homolog (MDV060) from Gallus gallus (Chicken).